The following is a 553-amino-acid chain: Transcriptional regulator HilA (553 aa).

The segment at residues 11 to 107 is a DNA-binding region (ompR/PhoB-type); that stretch reads NKKFVFDDFI…LYGQGYRFNR (97 aa). D62 is modified (4-aspartylphosphate). Residues 372-405 form a TPR repeat; the sequence is ADIKYYYGWNLFMAGQLEEALQTINECLKLDPTR.

The main transcriptional regulator of the Salmonella pathogenicity island 1 (SPI1) gene expression. Activates the expression of invasion genes by a direct action at their promoters and also indirectly by increasing the level of invF. Also binds upstream of prgH and directly activates the expression of prgHIJK operon. In Salmonella typhi, this protein is Transcriptional regulator HilA (hilA).